We begin with the raw amino-acid sequence, 495 residues long: Solute carrier family 2, facilitated glucose transporter member 3 (495 aa).

Over 1-10 the chain is Cytoplasmic; sequence MGTQKVTVSL. Residues 11 to 32 traverse the membrane as a helical segment; it reads IFALSIATIGSFQFGYNTGVIN. At 33–64 the chain is on the extracellular side; sequence APETIIKDFLNYTLEEKSENLPTEVLLTSLWS. N-linked (GlcNAc...) asparagine glycosylation is present at Asn-43. A helical membrane pass occupies residues 65 to 85; the sequence is LSVAIFSVGGMIGSFSVGLFV. The Cytoplasmic segment spans residues 86–90; the sequence is NRFGR. Residues 91 to 111 form a helical membrane-spanning segment; that stretch reads RNSMLMVNLLAVAGGCLMGFC. Topologically, residues 112–118 are extracellular; the sequence is KIAQSVE. Residues 119–142 form a helical membrane-spanning segment; that stretch reads MLILGRLIIGLFCGLCTGFVPMYI. Residues 143 to 153 are Cytoplasmic-facing; it reads GEISPTALRGA. A helical membrane pass occupies residues 154 to 174; sequence FGTLNQLGIVIGILVAQIFGL. Gln-159 contributes to the D-glucose binding site. Topologically, residues 175-183 are extracellular; sequence KVIMGTEEL. Residues 184–204 traverse the membrane as a helical segment; it reads WPLLLGFTIIPAVLQSAALPF. The Cytoplasmic segment spans residues 205-269; sequence CPESPRFLLI…LFRSRSYRQP (65 aa). Thr-232 is subject to Phosphothreonine. The chain crosses the membrane as a helical span at residues 270–290; the sequence is IIISIMLQLSQQLSGINAVFY. An important for selectivity against fructose region spans residues 277-279; the sequence is QLS. Residues 280–281 and Asn-286 contribute to the D-glucose site; that span reads QQ. Residues 291 to 304 are Extracellular-facing; it reads YSTGIFKDAGVEEP. The helical transmembrane segment at 305–325 threads the bilayer; sequence IYATIGAGVVNTIFTVVSLFL. Asn-315 contributes to the D-glucose binding site. At 326 to 331 the chain is on the cytoplasmic side; it reads VERAGR. The chain crosses the membrane as a helical span at residues 332–352; it reads RTLHMIGLGGMAVCSILMTIS. Topologically, residues 353-363 are extracellular; the sequence is LLLKDNYNWMS. A helical membrane pass occupies residues 364 to 389; sequence FVCIGAILVFVAFFEIGPGPIPWFIV. D-glucose is bound by residues Glu-378 and Trp-386. The Cytoplasmic segment spans residues 390-399; sequence AELFSQGPRP. The chain crosses the membrane as a helical span at residues 400-420; it reads AAMAVAGCSNWTSNFLVGLLF. The Extracellular segment spans residues 421-429; it reads PSAAFYLGA. A helical transmembrane segment spans residues 430-450; it reads YVFIIFTGFLIVFLVFTFFKV. Over 451-495 the chain is Cytoplasmic; sequence PETRGRTFEEITRAFEGQGQDANRAEKGPIVEMNSMQPVKETATV. Ser-485 is subject to Phosphoserine. A Phosphothreonine modification is found at Thr-492.

The protein belongs to the major facilitator superfamily. Sugar transporter (TC 2.A.1.1) family. Glucose transporter subfamily. Interacts with SMIM43; the interaction may promote SLC2A3-mediated glucose transport to meet the energy needs of mesendoderm differentiation.

The protein localises to the cell membrane. Its subcellular location is the perikaryon. The protein resides in the cell projection. The enzyme catalyses D-glucose(out) = D-glucose(in). It carries out the reaction D-galactose(in) = D-galactose(out). Its activity is regulated as follows. Deoxyglucose transport is inhibited by D-glucose, D-galactose and maltose. Galactose transport is inhibited by D-glucose and maltose. Its function is as follows. Facilitative glucose transporter. Can also mediate the uptake of various other monosaccharides across the cell membrane. Mediates the uptake of glucose, 2-deoxyglucose, galactose, mannose, xylose and fucose, and probably also dehydroascorbate. Does not mediate fructose transport. Required for mesendoderm differentiation. This is Solute carrier family 2, facilitated glucose transporter member 3 from Canis lupus familiaris (Dog).